A 262-amino-acid chain; its full sequence is MLIFDSGVGGLSILKNIKKILPNIHYIYMLDNESFPYGNKTEFFIIQRSIKIIHTIKKIYPINIVVIACNTISTVALSILREKFDIPIFGIFPHIKAAEKITKNKIIGLIATKATINSSYTQKTIYEYSCSNTIKIIGTNKLAVIAEKKIRGVAVSQKKLKNIFRPWINLPTCPDTIILGCTHFSLLEKEIKNILYKTRSVYFIDSIKKVIFQIKSYLKTSNVNQKIKKNIFLYSKNNNNLKKLLSFLKQYKFTVIKHINLN.

Substrate contacts are provided by residues 5 to 6 and 37 to 38; these read DS and YG. C69 (proton donor/acceptor) is an active-site residue. A substrate-binding site is contributed by 70 to 71; sequence NT. The Proton donor/acceptor role is filled by C181. 182–183 is a substrate binding site; that stretch reads TH.

Belongs to the aspartate/glutamate racemases family.

The catalysed reaction is L-glutamate = D-glutamate. It functions in the pathway cell wall biogenesis; peptidoglycan biosynthesis. Functionally, provides the (R)-glutamate required for cell wall biosynthesis. The polypeptide is Glutamate racemase (Buchnera aphidicola subsp. Acyrthosiphon pisum (strain 5A)).